A 273-amino-acid polypeptide reads, in one-letter code: Large ribosomal subunit protein uL2 (273 aa).

The disordered stretch occupies residues 221 to 262 (RGTAMNPVDHPHGGGEGRNFGKHPVTPWGVQTKGKKTRHNKR). A compositionally biased stretch (basic residues) spans 253–262 (KGKKTRHNKR).

Belongs to the universal ribosomal protein uL2 family. Part of the 50S ribosomal subunit. Forms a bridge to the 30S subunit in the 70S ribosome.

One of the primary rRNA binding proteins. Required for association of the 30S and 50S subunits to form the 70S ribosome, for tRNA binding and peptide bond formation. It has been suggested to have peptidyltransferase activity; this is somewhat controversial. Makes several contacts with the 16S rRNA in the 70S ribosome. This Aggregatibacter actinomycetemcomitans (Actinobacillus actinomycetemcomitans) protein is Large ribosomal subunit protein uL2.